The chain runs to 119 residues: Large ribosomal subunit protein uL18 (119 aa).

Belongs to the universal ribosomal protein uL18 family. In terms of assembly, part of the 50S ribosomal subunit; part of the 5S rRNA/L5/L18/L25 subcomplex. Contacts the 5S and 23S rRNAs.

In terms of biological role, this is one of the proteins that bind and probably mediate the attachment of the 5S RNA into the large ribosomal subunit, where it forms part of the central protuberance. This Desulfovibrio desulfuricans (strain ATCC 27774 / DSM 6949 / MB) protein is Large ribosomal subunit protein uL18.